The following is a 556-amino-acid chain: Endoglucanase 22 (556 aa).

The signal sequence occupies residues 1–33 (MSRGRARLQPPPPGTRTTTLAAVLVLVLLAVVA). D108 functions as the Nucleophile in the catalytic mechanism. Residues H450, D502, and E511 contribute to the active site.

The protein belongs to the glycosyl hydrolase 9 (cellulase E) family.

Its subcellular location is the secreted. The enzyme catalyses Endohydrolysis of (1-&gt;4)-beta-D-glucosidic linkages in cellulose, lichenin and cereal beta-D-glucans.. The sequence is that of Endoglucanase 22 (GLU11) from Oryza sativa subsp. japonica (Rice).